We begin with the raw amino-acid sequence, 1017 residues long: MDKYRLTPHKITICVLVEYYLNGTIKYHQKQSLSHLLIRHIKENNYQDTVKEVSLYDFIEKELKYVLPIQFINNEFLRMIQFDSVDDIYQFMSSLKELFNGSNDHESINSKQMQLLDSKSILGIFIKKVILNFNQILFDGLIKLYDQLDQYLNDFYNEINKIQQQQQQQQQKEHCENDNSIDMSMDQEQQQQQQEDYNEISNYENKIKFLSPLDEERFIYEETIRINSLIGIETPLEIENQVNRLKASLPNVKRVHLISLLFNIGYQDYDQSLEDLHRYFDYVNGQMTSSQWSSSASSFLFTPNDNYQSGNSNSSNYYYNNYNFIGGSGDTTNLMLPYAVLNLVRLHYHFGHYEESYLALREAIRIAQERADHSCLALADHWLARLLKKSVYNSMESSNLLQYLLASHSDSEILKKSIERSRDLEMPDLLALNHTAFSKYKLENGEFSTNINSNNYNSNNNNNNNNSNTNNNTNNNNNTNNANNNNNNNNNNTNNTNNNNNNNNNNNNNNNNNNNNNNSSNSNNNGGVNMFGKSFHLWNDIFQPIEISRLLDKSSSTAMIAHHLYSSSWELLGNNDLAQFFTELAMKSYHSNDLSLQHDPLRAVSSQNTIIYNIGTNNNNNNNNNNNQIKQQQQQNQQPPDLLSFCKLALLYSKKSKYNEAIQILIKCFSIYKTQHLCGNLLTFTVLSILFDHLMINIDNNNNNNNNNNNNNNNNNNNNNNDNELLISIVIESLINITNRFQSEDSVDGSGWSQIVICYQKIIKYYCNVRGMYEKSMNLIVKGIQISRDFGLDSQITHFYSLLSKIYEKSSPYRFSGLSDTLSALSLSNSYHLANSIADSNIALIKIHLSTDRLDKAITLIKETLPMVLSDKLLNSQLYLLWAKSLISTSTKQSIDYLNRSEQLFLQLFSNQSNNNNNNNNNNNNNNELLKEIYYLKSIIYNDLGDIENRNLYAKKFKSILVPSSSIQQQQQQQQQQQQQQQQQQQQQQQSNQSPVINSVQPTPKICLVPPILMKIR.

TPR repeat units follow at residues 30–63, 182–214, 252–286, 337–370, and 508–541; these read KQSL…EKEL, DMSM…SPLD, VKRV…VNGQ, PYAV…AQER, and NNNN…WNDI. Residues 451 to 525 show a composition bias toward low complexity; the sequence is INSNNYNSNN…NNNSSNSNNN (75 aa). Disordered regions lie at residues 451–527 and 617–636; these read INSN…NNGG and NNNN…QQQN. TPR repeat units follow at residues 642-675, 756-790, 838-871, 876-908, and 931-964; these read LLSF…YKTQ, VICY…SRDF, ADSN…VLSD, SQLY…FLQL, and KEIY…LVPS.

Belongs to the APC5 family. In terms of assembly, the APC/C is composed of at least 13 subunits that stay tightly associated throughout the cell cycle: anapc1, anapc2, anapc3, anapc4, anapc5, anapc6, anapc7, anapc8, anapc10, anapc11, cdc20, cdc26 and cdh1.

The protein localises to the nucleus. It participates in protein modification; protein ubiquitination. Its function is as follows. Component of the anaphase promoting complex/cyclosome (APC/C), a cell cycle-regulated E3 ubiquitin-protein ligase complex that controls progression through mitosis and the G1 phase of the cell cycle. This is Anaphase-promoting complex subunit 5 (anapc5) from Dictyostelium discoideum (Social amoeba).